We begin with the raw amino-acid sequence, 585 residues long: Organic cation transporter 1 (585 aa).

Residues 1–40 lie on the Cytoplasmic side of the membrane; it reads MSFQAMETFAEISQEILMSATKPPDFDFVLEQVGNYGTYQ. A helical membrane pass occupies residues 41-61; it reads IVFFFIICLPTSLPSAFSAFN. Residues 62–155 are Extracellular-facing; it reads IPFVVGNPPH…LVCDQQAWIE (94 aa). N-linked (GlcNAc...) asparagine glycosylation is found at N87, N98, and N133. A helical membrane pass occupies residues 156–176; it reads ISTTSFYVGSFIGNCLFGYVA. At 177–184 the chain is on the cytoplasmic side; sequence DKFGRRRS. Residues 185–205 traverse the membrane as a helical segment; the sequence is FFVILTVLIVCGTASSFAKDI. The Extracellular segment spans residues 206–212; it reads ESFIILR. Residues 213–233 traverse the membrane as a helical segment; it reads FFTGLAFPALFQIPFIICMEF. Over 234–243 the chain is Cytoplasmic; the sequence is MGNSGRIFSG. Residues 244-264 traverse the membrane as a helical segment; sequence LMTSLFFGAAMALLGVVAMFI. The Extracellular portion of the chain corresponds to 265-269; sequence RRWRQ. A helical membrane pass occupies residues 270 to 290; sequence LTFFCNAPFAFYIIYYFFLPE. Over 291 to 360 the chain is Cytoplasmic; it reads SPRWSVSVGK…FKTPNLRRKT (70 aa). A helical membrane pass occupies residues 361 to 381; sequence LIVTYIWVMNAIIYNGLTLNV. Residues 382–389 lie on the Extracellular side of the membrane; it reads SNLPVDDY. Residues 390-410 form a helical membrane-spanning segment; the sequence is WSFIINGAVELPGYFVVWPLL. The Cytoplasmic segment spans residues 411 to 416; that stretch reads QCAGRR. Residues 417–437 form a helical membrane-spanning segment; that stretch reads WTLAATMIVCGIGCVSAMFMP. Residues 438 to 446 are Extracellular-facing; it reads DGYPWLVAS. The helical transmembrane segment at 447–467 threads the bilayer; sequence ASFIGKFGVGSGFAVIYIFAG. Topologically, residues 468-476 are cytoplasmic; sequence ELYPTVVRA. The chain crosses the membrane as a helical span at residues 477–497; sequence IGMGMSSMVAGSGLLLAPHIV. Topologically, residues 498 to 504 are extracellular; the sequence is NLGKIVK. The chain crosses the membrane as a helical span at residues 505 to 525; it reads ILPLLIMGLMALSAGILTFFL. Over 526 to 585 the chain is Cytoplasmic; sequence PETLGAPLPMTIEDAENFGKKPEPDSGMFTQAAKKRESQPLLEPHTPMDRRRRSSRLMNI. Positions 544 to 585 are disordered; that stretch reads GKKPEPDSGMFTQAAKKRESQPLLEPHTPMDRRRRSSRLMNI. Positions 575–585 are enriched in basic residues; the sequence is RRRRSSRLMNI.

Belongs to the major facilitator (TC 2.A.1) superfamily. Organic cation transporter (TC 2.A.1.19) family.

The protein localises to the membrane. In terms of biological role, transports organic cations such as tetraethylammonium (TEA). Displays a broad substrate specificity. This chain is Organic cation transporter 1 (oct-1), found in Caenorhabditis elegans.